We begin with the raw amino-acid sequence, 36 residues long: Alpha-conotoxin-like Pu1.3 (36 aa).

Residues 1 to 21 (SDGRNAGADRKGFGLISQMFK) constitute a propeptide that is removed on maturation. Cystine bridges form between Cys24–Cys30 and Cys25–Cys36.

The protein belongs to the conotoxin A superfamily. Expressed by the venom duct.

It is found in the secreted. In terms of biological role, alpha-conotoxins act on postsynaptic membranes, they bind to the nicotinic acetylcholine receptors (nAChR) and thus inhibit them. In Conus pulicarius (Flea-bitten cone), this protein is Alpha-conotoxin-like Pu1.3.